Consider the following 143-residue polypeptide: Small ribosomal subunit protein eS12 (143 aa).

It belongs to the eukaryotic ribosomal protein eS12 family. As to quaternary structure, component of the small ribosomal subunit. Mature ribosomes consist of a small (40S) and a large (60S) subunit. The 40S subunit contains about 32 different proteins and 1 molecule of RNA (18S). The 60S subunit contains 45 different proteins and 3 molecules of RNA (25S, 5.8S and 5S).

It is found in the cytoplasm. Functionally, component of the ribosome, a large ribonucleoprotein complex responsible for the synthesis of proteins in the cell. The small ribosomal subunit (SSU) binds messenger RNAs (mRNAs) and translates the encoded message by selecting cognate aminoacyl-transfer RNA (tRNA) molecules. The large subunit (LSU) contains the ribosomal catalytic site termed the peptidyl transferase center (PTC), which catalyzes the formation of peptide bonds, thereby polymerizing the amino acids delivered by tRNAs into a polypeptide chain. The nascent polypeptides leave the ribosome through a tunnel in the LSU and interact with protein factors that function in enzymatic processing, targeting, and the membrane insertion of nascent chains at the exit of the ribosomal tunnel. The chain is Small ribosomal subunit protein eS12 (RPS12) from Candida albicans (strain SC5314 / ATCC MYA-2876) (Yeast).